The following is a 285-amino-acid chain: NADPH-dependent 7-cyano-7-deazaguanine reductase (285 aa).

Substrate is bound at residue 80–82 (VES). NADPH is bound at residue 82–83 (SK). Cys-191 functions as the Thioimide intermediate in the catalytic mechanism. Asp-198 acts as the Proton donor in catalysis. Residue 231-232 (HE) coordinates substrate. 260 to 261 (RG) serves as a coordination point for NADPH.

Belongs to the GTP cyclohydrolase I family. QueF type 2 subfamily. Homodimer.

The protein localises to the cytoplasm. It catalyses the reaction 7-aminomethyl-7-carbaguanine + 2 NADP(+) = 7-cyano-7-deazaguanine + 2 NADPH + 3 H(+). The protein operates within tRNA modification; tRNA-queuosine biosynthesis. Catalyzes the NADPH-dependent reduction of 7-cyano-7-deazaguanine (preQ0) to 7-aminomethyl-7-deazaguanine (preQ1). This is NADPH-dependent 7-cyano-7-deazaguanine reductase from Psychrobacter arcticus (strain DSM 17307 / VKM B-2377 / 273-4).